Consider the following 132-residue polypeptide: Gamma-crystallin-5 (132 aa).

Positions 1–40 (ILYEQPSYRGHQYYLWKGEYPDFQRWMGFNDSIRSCRMSP) constitute a Beta/gamma crystallin 'Greek key' 2 domain. Positions 41 to 45 (YHQGQ) are connecting peptide. Beta/gamma crystallin 'Greek key' domains follow at residues 46–86 (YKMR…NVFD) and 87–129 (GNWM…RRVH).

This sequence belongs to the beta/gamma-crystallin family. Monomer.

Its function is as follows. Crystallins are the dominant structural components of the vertebrate eye lens. In Xenopus laevis (African clawed frog), this protein is Gamma-crystallin-5 (cryg5).